A 1390-amino-acid chain; its full sequence is ATPase family AAA domain-containing protein 2 (1390 aa).

The segment at 40 to 63 (RSAGAAQKKPAATTAKAGDGSSVK) is disordered. Residues 42-57 (AGAAQKKPAATTAKAG) show a composition bias toward low complexity. Residues Ser60 and Ser61 each carry the phosphoserine modification. Lys125 is covalently cross-linked (Glycyl lysine isopeptide (Lys-Gly) (interchain with G-Cter in SUMO2)). Residues Ser165 and Ser170 each carry the phosphoserine modification. The interval 216–380 (LNMYTRGKQK…HFERRRKRSR (165 aa)) is disordered. Residues 223 to 232 (KQKDIQRTDE) show a composition bias toward basic and acidic residues. The segment covering 244-288 (SSEEGEDQEHEDDGEDEDDEDDDDDDDDDDDDDDEDDEDEEDGEE) has biased composition (acidic residues). Lys317 is covalently cross-linked (Glycyl lysine isopeptide (Lys-Gly) (interchain with G-Cter in SUMO2)). 4 positions are modified to phosphoserine: Ser327, Ser337, Ser342, and Ser410. 467-474 (GPPGTGKT) contacts ATP. A phosphoserine mark is found at Ser746 and Ser751. Coiled coils occupy residues 970-994 (LTAEEVKRLEEQEEDTFRELRIFLR) and 1086-1112 (YAIIKEELDEDFEQLCEEIQESRKKRG). Positions 980–1092 (EQEEDTFREL…DTAYAIIKEE (113 aa)) constitute a Bromo domain. A disordered region spans residues 1124–1163 (HVMPKQNSTLVGDKRSDPEQNEKLKTPSTPVACSTPAQLK). Residue Lys1128 forms a Glycyl lysine isopeptide (Lys-Gly) (interchain with G-Cter in SUMO2) linkage. The span at 1135-1148 (GDKRSDPEQNEKLK) shows a compositional bias: basic and acidic residues. Ser1139 is subject to Phosphoserine. Lys1148 is covalently cross-linked (Glycyl lysine isopeptide (Lys-Gly) (interchain with G-Cter in SUMO2)). Phosphothreonine occurs at positions 1149, 1152, and 1176. The segment covering 1149–1160 (TPSTPVACSTPA) has biased composition (polar residues). Residues 1181-1242 (RKISQAKDDS…SESKLELRNN (62 aa)) are disordered. The segment covering 1185 to 1200 (QAKDDSQNAIDHKIES) has biased composition (basic and acidic residues). Ser1200, Ser1233, and Ser1235 each carry phosphoserine. Over residues 1229-1242 (QQNASESKLELRNN) the composition is skewed to polar residues. Lys1236 is covalently cross-linked (Glycyl lysine isopeptide (Lys-Gly) (interchain with G-Cter in SUMO2)). 2 positions are modified to phosphoserine: Ser1243 and Ser1302. Position 1323 is a phosphothreonine (Thr1323).

The protein belongs to the AAA ATPase family. In terms of assembly, interacts with ESR1 and NCOA3 and these interactions are enhanced by estradiol. Interacts with acetylated lysine residues on histone H1.4, H2A, H2B and H3 (in vitro). In terms of tissue distribution, highly expressed in estrogen receptor positive breast tumors and in osteosarcoma tumors.

Its subcellular location is the nucleus. The catalysed reaction is ATP + H2O = ADP + phosphate + H(+). Functionally, may be a transcriptional coactivator of the nuclear receptor ESR1 required to induce the expression of a subset of estradiol target genes, such as CCND1, MYC and E2F1. May play a role in the recruitment or occupancy of CREBBP at some ESR1 target gene promoters. May be required for histone hyperacetylation. Involved in the estrogen-induced cell proliferation and cell cycle progression of breast cancer cells. The sequence is that of ATPase family AAA domain-containing protein 2 (ATAD2) from Homo sapiens (Human).